Consider the following 308-residue polypeptide: Ornithine carbamoyltransferase (308 aa).

Carbamoyl phosphate-binding positions include 52 to 55 (STRT), Gln79, Arg103, and 130 to 133 (HPLQ). Residues Asn162, Asp224, and 228-229 (SM) contribute to the L-ornithine site. Carbamoyl phosphate contacts are provided by residues 264–265 (CL) and Arg292.

The protein belongs to the aspartate/ornithine carbamoyltransferase superfamily. OTCase family.

Its subcellular location is the cytoplasm. The catalysed reaction is carbamoyl phosphate + L-ornithine = L-citrulline + phosphate + H(+). It functions in the pathway amino-acid biosynthesis; L-arginine biosynthesis; L-arginine from L-ornithine and carbamoyl phosphate: step 1/3. Reversibly catalyzes the transfer of the carbamoyl group from carbamoyl phosphate (CP) to the N(epsilon) atom of ornithine (ORN) to produce L-citrulline. This chain is Ornithine carbamoyltransferase, found in Pyrobaculum calidifontis (strain DSM 21063 / JCM 11548 / VA1).